The primary structure comprises 497 residues: L-arabinose isomerase (497 aa).

4 residues coordinate Mn(2+): Glu-306, Glu-333, His-349, and His-448.

The protein belongs to the arabinose isomerase family. Mn(2+) is required as a cofactor.

It carries out the reaction beta-L-arabinopyranose = L-ribulose. It participates in carbohydrate degradation; L-arabinose degradation via L-ribulose; D-xylulose 5-phosphate from L-arabinose (bacterial route): step 1/3. In terms of biological role, catalyzes the conversion of L-arabinose to L-ribulose. This chain is L-arabinose isomerase, found in Vibrio parahaemolyticus serotype O3:K6 (strain RIMD 2210633).